The primary structure comprises 338 residues: tRNA pseudouridine synthase D (338 aa).

Residue aspartate 79 is the Nucleophile of the active site. One can recognise a TRUD domain in the interval 154 to 303 (GVPNYFGEQR…EEAWRANILY (150 aa)).

The protein belongs to the pseudouridine synthase TruD family.

It carries out the reaction uridine(13) in tRNA = pseudouridine(13) in tRNA. Responsible for synthesis of pseudouridine from uracil-13 in transfer RNAs. The sequence is that of tRNA pseudouridine synthase D from Legionella pneumophila (strain Corby).